The sequence spans 557 residues: Potassium-transporting ATPase potassium-binding subunit (557 aa).

10 consecutive transmembrane segments (helical) span residues 6–26, 59–79, 127–147, 172–192, 247–267, 278–298, 363–383, 410–430, 475–495, and 520–540; these read IQLL…GLGL, ALSL…ILFF, AGLT…LLAL, LYVL…FGVV, ISNF…VFLY, WAIF…VWTF, IVFG…LLTV, ILGI…SVSV, VMIA…VLVI, and FYIL…FPVL.

It belongs to the KdpA family. In terms of assembly, the system is composed of three essential subunits: KdpA, KdpB and KdpC.

The protein localises to the cell inner membrane. Its function is as follows. Part of the high-affinity ATP-driven potassium transport (or Kdp) system, which catalyzes the hydrolysis of ATP coupled with the electrogenic transport of potassium into the cytoplasm. This subunit binds the periplasmic potassium ions and delivers the ions to the membrane domain of KdpB through an intramembrane tunnel. The protein is Potassium-transporting ATPase potassium-binding subunit of Leptospira interrogans serogroup Icterohaemorrhagiae serovar Lai (strain 56601).